The primary structure comprises 45 residues: Large ribosomal subunit protein bL34 (45 aa).

The segment at 1 to 45 (MTKRTLGGTVRKQKRTSGFRARMRSHTGQNVIRARRKKGRHRLTV) is disordered. 2 stretches are compositionally biased toward basic residues: residues 11 to 25 (RKQK…RMRS) and 33 to 45 (RARR…RLTV).

It belongs to the bacterial ribosomal protein bL34 family.

This chain is Large ribosomal subunit protein bL34, found in Picosynechococcus sp. (strain ATCC 27264 / PCC 7002 / PR-6) (Agmenellum quadruplicatum).